The primary structure comprises 212 residues: Ribonuclease HII (212 aa).

The RNase H type-2 domain occupies 17-211; that stretch reads RVLAGIDEAG…VLELLDLTDS (195 aa). D23, E24, and D120 together coordinate a divalent metal cation.

It belongs to the RNase HII family. It depends on Mn(2+) as a cofactor. Mg(2+) is required as a cofactor.

The protein localises to the cytoplasm. The catalysed reaction is Endonucleolytic cleavage to 5'-phosphomonoester.. In terms of biological role, endonuclease that specifically degrades the RNA of RNA-DNA hybrids. The chain is Ribonuclease HII from Chloroflexus aggregans (strain MD-66 / DSM 9485).